The following is a 272-amino-acid chain: MSDIHSLLVAAILGVVEGLTEFLPVSSTGHMIIVGHLLGFEGDTAETFEVVIQLGSILAVVVMFWRRLFGLIGIHFGKQPHEGTGKGRLTLGHIVLGMIPAVVLGLVFHDTIKSLFNPVNVMYALVVGGLLLIAAECLKPKEPRAPGLDDMTYRQAFMIGCFQCLALWPGFSRSGATISGGMLMGVSRYAASEFSFLLAVPMMMGATALDLYKSWSFLTVEDIPMFAVGFVTAFIVALIAIKTFLQLIKRISFIPFAIYRFIVAAAVYVVFF.

8 helical membrane passes run I4–P24, A45–W65, L89–H109, L115–A135, T152–S174, Y189–L209, M225–L245, and I251–F271.

It belongs to the UppP family.

The protein resides in the cell inner membrane. The catalysed reaction is di-trans,octa-cis-undecaprenyl diphosphate + H2O = di-trans,octa-cis-undecaprenyl phosphate + phosphate + H(+). Catalyzes the dephosphorylation of undecaprenyl diphosphate (UPP). Confers resistance to bacitracin. The chain is Undecaprenyl-diphosphatase from Citrobacter koseri (strain ATCC BAA-895 / CDC 4225-83 / SGSC4696).